A 229-amino-acid polypeptide reads, in one-letter code: Cytidylate kinase (229 aa).

Residue 12-20 coordinates ATP; the sequence is GPSGVGKST.

The protein belongs to the cytidylate kinase family. Type 1 subfamily.

Its subcellular location is the cytoplasm. The catalysed reaction is CMP + ATP = CDP + ADP. It carries out the reaction dCMP + ATP = dCDP + ADP. This chain is Cytidylate kinase, found in Mesomycoplasma hyopneumoniae (strain 7448) (Mycoplasma hyopneumoniae).